A 992-amino-acid polypeptide reads, in one-letter code: Exportin-T (992 aa).

The protein belongs to the exportin family.

The protein localises to the nucleus. It localises to the cytoplasm. TRNA nucleus export receptor which facilitates tRNA translocation across the nuclear pore complex. Involved in pre-tRNA splicing, probably by affecting the interaction of pre-tRNA with splicing endonuclease. This chain is Exportin-T (LOS1), found in Scheffersomyces stipitis (strain ATCC 58785 / CBS 6054 / NBRC 10063 / NRRL Y-11545) (Yeast).